A 101-amino-acid polypeptide reads, in one-letter code: DET1- and DDB1-associated protein 1 (101 aa).

Residues N67–T101 form a disordered region.

Belongs to the DDA1 family. In terms of assembly, component of numerous DCX (DDB1-CUL4-X-box) E3 ubiquitin-protein ligase complexes which consist of a core of DDB1, cullin-4 (CUL4A or CUL4B), DDA1 and RBX1.

The protein operates within protein modification; protein ubiquitination. Functions as a component of numerous distinct DCX (DDB1-CUL4-X-box) E3 ubiquitin-protein ligase complexes which mediate the ubiquitination and subsequent proteasomal degradation of target proteins. In the DCX complexes, acts as a scaffolding subunit required to stabilize the complex. This chain is DET1- and DDB1-associated protein 1, found in Xenopus tropicalis (Western clawed frog).